The following is a 327-amino-acid chain: Delta(3,5)-Delta(2,4)-dienoyl-CoA isomerase, mitochondrial (327 aa).

The transit peptide at 1 to 33 (MATAMTVSSKLRGLLMQQLRGTSQLYFNISLRS) directs the protein to the mitochondrion. Substrate is bound at residue 115–119 (SGIDL). Residue lysine 147 is modified to N6-acetyllysine. Glycine 173 lines the substrate pocket. The residue at position 230 (lysine 230) is an N6-succinyllysine. Position 267 is a phosphoserine (serine 267). Lysine 316 carries the N6-succinyllysine modification. Positions 325-327 (SKL) match the Microbody targeting signal motif. N6-acetyllysine is present on lysine 326.

The protein belongs to the enoyl-CoA hydratase/isomerase family. Homohexamer.

The protein resides in the mitochondrion. It localises to the peroxisome. It carries out the reaction (3E,5Z)-octadienoyl-CoA = (2E,4E)-octadienoyl-CoA. The catalysed reaction is (3E,5Z,8Z,11Z,14Z)-eicosapentaenoyl-CoA = (2E,4E,8Z,11Z,14Z)-eicosapentaenoyl-CoA. It participates in lipid metabolism; fatty acid beta-oxidation. In terms of biological role, isomerization of 3-trans,5-cis-dienoyl-CoA to 2-trans,4-trans-dienoyl-CoA. The protein is Delta(3,5)-Delta(2,4)-dienoyl-CoA isomerase, mitochondrial of Mus musculus (Mouse).